The primary structure comprises 254 residues: Phosphoribosylaminoimidazole-succinocarboxamide synthase (254 aa).

Belongs to the SAICAR synthetase family.

The catalysed reaction is 5-amino-1-(5-phospho-D-ribosyl)imidazole-4-carboxylate + L-aspartate + ATP = (2S)-2-[5-amino-1-(5-phospho-beta-D-ribosyl)imidazole-4-carboxamido]succinate + ADP + phosphate + 2 H(+). The protein operates within purine metabolism; IMP biosynthesis via de novo pathway; 5-amino-1-(5-phospho-D-ribosyl)imidazole-4-carboxamide from 5-amino-1-(5-phospho-D-ribosyl)imidazole-4-carboxylate: step 1/2. The sequence is that of Phosphoribosylaminoimidazole-succinocarboxamide synthase from Brucella canis (strain ATCC 23365 / NCTC 10854 / RM-666).